Reading from the N-terminus, the 246-residue chain is 3-deoxy-manno-octulosonate cytidylyltransferase (246 aa).

Belongs to the KdsB family.

It is found in the cytoplasm. The catalysed reaction is 3-deoxy-alpha-D-manno-oct-2-ulosonate + CTP = CMP-3-deoxy-beta-D-manno-octulosonate + diphosphate. Its pathway is nucleotide-sugar biosynthesis; CMP-3-deoxy-D-manno-octulosonate biosynthesis; CMP-3-deoxy-D-manno-octulosonate from 3-deoxy-D-manno-octulosonate and CTP: step 1/1. The protein operates within bacterial outer membrane biogenesis; lipopolysaccharide biosynthesis. Activates KDO (a required 8-carbon sugar) for incorporation into bacterial lipopolysaccharide in Gram-negative bacteria. This is 3-deoxy-manno-octulosonate cytidylyltransferase from Chloroherpeton thalassium (strain ATCC 35110 / GB-78).